Here is a 102-residue protein sequence, read N- to C-terminus: Thioredoxin (102 aa).

The Thioredoxin domain maps to 2–102 (VTEIKSLKQL…KAKIVQLVSQ (101 aa)). C30 and C33 are disulfide-bonded.

Belongs to the thioredoxin family.

Participates in various redox reactions through the reversible oxidation of its active center dithiol to a disulfide and catalyzes dithiol-disulfide exchange reactions. The polypeptide is Thioredoxin (trxA) (Mycoplasma pneumoniae (strain ATCC 29342 / M129 / Subtype 1) (Mycoplasmoides pneumoniae)).